A 715-amino-acid polypeptide reads, in one-letter code: Fatty acid oxidation complex subunit alpha (715 aa).

Residues Met-1–Ala-190 are enoyl-CoA hydratase/isomerase. Asp-297 is a substrate binding site. The tract at residues His-312 to Asn-715 is 3-hydroxyacyl-CoA dehydrogenase. NAD(+)-binding positions include Met-325, Asp-344, Val-401–Glu-403, Lys-408, and Ser-430. The active-site For 3-hydroxyacyl-CoA dehydrogenase activity is His-451. Asn-454 lines the NAD(+) pocket. Positions 501 and 660 each coordinate substrate.

This sequence in the N-terminal section; belongs to the enoyl-CoA hydratase/isomerase family. It in the C-terminal section; belongs to the 3-hydroxyacyl-CoA dehydrogenase family. Heterotetramer of two alpha chains (FadB) and two beta chains (FadA).

It carries out the reaction a (3S)-3-hydroxyacyl-CoA + NAD(+) = a 3-oxoacyl-CoA + NADH + H(+). The catalysed reaction is a (3S)-3-hydroxyacyl-CoA = a (2E)-enoyl-CoA + H2O. The enzyme catalyses a 4-saturated-(3S)-3-hydroxyacyl-CoA = a (3E)-enoyl-CoA + H2O. It catalyses the reaction (3S)-3-hydroxybutanoyl-CoA = (3R)-3-hydroxybutanoyl-CoA. It carries out the reaction a (3Z)-enoyl-CoA = a 4-saturated (2E)-enoyl-CoA. The catalysed reaction is a (3E)-enoyl-CoA = a 4-saturated (2E)-enoyl-CoA. Its pathway is lipid metabolism; fatty acid beta-oxidation. Involved in the aerobic and anaerobic degradation of long-chain fatty acids via beta-oxidation cycle. Catalyzes the formation of 3-oxoacyl-CoA from enoyl-CoA via L-3-hydroxyacyl-CoA. It can also use D-3-hydroxyacyl-CoA and cis-3-enoyl-CoA as substrate. This chain is Fatty acid oxidation complex subunit alpha, found in Pseudomonas putida (strain GB-1).